Reading from the N-terminus, the 288-residue chain is Acetyl-coenzyme A carboxylase carboxyl transferase subunit beta (288 aa).

The 255-residue stretch at 34–288 (LFAKCPACKH…HLVAFHGGGQ (255 aa)) folds into the CoA carboxyltransferase N-terminal domain. Zn(2+) is bound by residues cysteine 38, cysteine 41, cysteine 56, and cysteine 59. The C4-type zinc finger occupies 38 to 59 (CPACKHMIYKKDLGLAKICPTC).

The protein belongs to the AccD/PCCB family. Acetyl-CoA carboxylase is a heterohexamer composed of biotin carboxyl carrier protein (AccB), biotin carboxylase (AccC) and two subunits each of ACCase subunit alpha (AccA) and ACCase subunit beta (AccD). Requires Zn(2+) as cofactor.

Its subcellular location is the cytoplasm. It catalyses the reaction N(6)-carboxybiotinyl-L-lysyl-[protein] + acetyl-CoA = N(6)-biotinyl-L-lysyl-[protein] + malonyl-CoA. The protein operates within lipid metabolism; malonyl-CoA biosynthesis; malonyl-CoA from acetyl-CoA: step 1/1. Functionally, component of the acetyl coenzyme A carboxylase (ACC) complex. Biotin carboxylase (BC) catalyzes the carboxylation of biotin on its carrier protein (BCCP) and then the CO(2) group is transferred by the transcarboxylase to acetyl-CoA to form malonyl-CoA. The chain is Acetyl-coenzyme A carboxylase carboxyl transferase subunit beta from Streptococcus pyogenes serotype M4 (strain MGAS10750).